The following is a 517-amino-acid chain: Histone H4 transcription factor (517 aa).

3 consecutive C2H2-type zinc fingers follow at residues 15–39 (LQCE…VTQH), 129–153 (FLCL…VEAH), and 169–193 (VLCG…LRSH). The C2H2-type 4; degenerate zinc finger occupies 199 to 221 (VACPTCGGMFANNTKFLDHIRRQ). 5 consecutive C2H2-type zinc fingers follow at residues 229 to 251 (FQCS…MRNH), 255 to 278 (YKCP…RFRH), 284 to 306 (FKCD…LDTH), 312 to 337 (YRCD…RKVH), and 345 to 368 (YKCH…RKKH). The interval 373–517 (PSGHPRFRYK…IAEEPEIQMV (145 aa)) is interaction with NPAT. The interval 374–407 (SGHPRFRYKEHEDGYMRLQLVRYESVELTQQLLR) is required for activation of histone H4 transcription and contributes to DNA-binding. The tract at residues 431-460 (TVPGEPGRKEEEEEGKGSEGTALSASQDNP) is disordered. Positions 451–460 (TALSASQDNP) are enriched in polar residues.

As to quaternary structure, binds MBD2 and a histone deacetylase complex. Interacts with NPAT. Ubiquitinated. Ubiquitination may lead to proteasome-mediated degradation. Ubiquitous. Highly expressed in brain, heart, skeletal muscle, spleen, kidney, small intestine, placenta and liver.

It localises to the nucleus. Functionally, transcriptional repressor that binds to the consensus sequence 5'-CGGACGTT-3' and to the RB1 promoter. Transcriptional activator that promotes histone H4 gene transcription at the G1/S phase transition in conjunction with NPAT. Also activates transcription of the ATM and PRKDC genes. Autoregulates its expression by associating with its own promoter. The polypeptide is Histone H4 transcription factor (HINFP) (Homo sapiens (Human)).